Consider the following 84-residue polypeptide: Exendin-2-long (84 aa).

Residues 1 to 23 (MKSILWLCVFGLLIATLFPVSWQ) form the signal peptide. A propeptide spanning residues 24–44 (MAIKSRLSSEDSETDQRLFES) is cleaved from the precursor.

It belongs to the glucagon family. In terms of processing, an amidated Pro-81 is described. Such an amidation is however not compatible with the sequence displayed. Indeed cDNAs do not encode a Gly that could serve as substrate for peptide alpha-amidation. Expressed by the venom gland. Not expressed in the pancreas, liver, stomach, small intestine, lung, heart, kidney, spleen, ovary, and brain.

The protein resides in the secreted. Functionally, has vasoactive intestinal peptide(VIP)/secretin-like biological activity. Interacts with rat and human VIP receptors 1 (VIPR1) and 2 (VIPR2), with the highest affinity for the human VIPR2. Induces hypotension that is mediated by relaxation of cardiac smooth muscle. This vasodilation may not be transduced by VIP or PACAP receptors. The polypeptide is Exendin-2-long (Heloderma suspectum (Gila monster)).